Reading from the N-terminus, the 237-residue chain is Phosphatidylserine decarboxylase proenzyme (237 aa).

S206 (schiff-base intermediate with substrate; via pyruvic acid) is an active-site residue. S206 bears the Pyruvic acid (Ser); by autocatalysis mark.

The protein belongs to the phosphatidylserine decarboxylase family. PSD-A subfamily. As to quaternary structure, heterodimer of a large membrane-associated beta subunit and a small pyruvoyl-containing alpha subunit. Pyruvate is required as a cofactor. Is synthesized initially as an inactive proenzyme. Formation of the active enzyme involves a self-maturation process in which the active site pyruvoyl group is generated from an internal serine residue via an autocatalytic post-translational modification. Two non-identical subunits are generated from the proenzyme in this reaction, and the pyruvate is formed at the N-terminus of the alpha chain, which is derived from the carboxyl end of the proenzyme. The post-translation cleavage follows an unusual pathway, termed non-hydrolytic serinolysis, in which the side chain hydroxyl group of the serine supplies its oxygen atom to form the C-terminus of the beta chain, while the remainder of the serine residue undergoes an oxidative deamination to produce ammonia and the pyruvoyl prosthetic group on the alpha chain.

It is found in the cell membrane. It carries out the reaction a 1,2-diacyl-sn-glycero-3-phospho-L-serine + H(+) = a 1,2-diacyl-sn-glycero-3-phosphoethanolamine + CO2. It participates in phospholipid metabolism; phosphatidylethanolamine biosynthesis; phosphatidylethanolamine from CDP-diacylglycerol: step 2/2. Its function is as follows. Catalyzes the formation of phosphatidylethanolamine (PtdEtn) from phosphatidylserine (PtdSer). This is Phosphatidylserine decarboxylase proenzyme from Rhodococcus erythropolis (strain PR4 / NBRC 100887).